Here is a 781-residue protein sequence, read N- to C-terminus: Catenin beta-1 (781 aa).

Position 2 is an N-acetylalanine (alanine 2). Residues 2 to 23 (ATQADLMELDMAMEPDRKAAVS) form an interaction with VCL region. Serine 23 carries the post-translational modification Phosphoserine; by GSK3-beta; alternate. An O-linked (GlcNAc) serine; alternate glycan is attached at serine 23. Position 29 is a phosphoserine; by GSK3-beta (serine 29). Phosphoserine; by GSK3-beta and HIPK2 is present on residues serine 33 and serine 37. Residues 34–57 (GIHSGATTTAPSLSGKGNPEEEDV) form a disordered region. Threonine 41 is modified (phosphothreonine; by GSK3-beta). Residue serine 45 is modified to Phosphoserine. Lysine 49 carries the N6-acetyllysine modification. Tyrosine 64 carries the phosphotyrosine; by PTK6 modification. Tyrosine 142 bears the Phosphotyrosine; by FYN and PTK6 mark. 12 ARM repeats span residues 151-191 (RAIP…IMRS), 193-234 (QMVS…IFKS), 235-276 (GGIP…VRLA), 277-318 (GGLQ…ILAS), 319-360 (GGPQ…IVEA), 361-389 (GGMQ…RNLS), 400-441 (GLLG…VCQV), 442-484 (GGIE…AQNA), 489-530 (YGLP…LREQ), 531-571 (GAIP…EIVE), 594-636 (NTIP…AEGA), and 637-666 (TAPL…SEDK). The segment at 156-178 (LTKLLNDEDQVVVNKAAVMVHQL) is interaction with BCL9. Serine 191 bears the Phosphoserine; by CDK5 mark. The residue at position 246 (serine 246) is a Phosphoserine; by CDK5. Position 331 is a phosphotyrosine; by PTK6 (tyrosine 331). Tyrosine 333 carries the post-translational modification Phosphotyrosine; by SRC and PTK6. Serine 552 is subject to Phosphoserine. At threonine 556 the chain carries (Microbial infection) Phosphothreonine. Threonine 556 carries the phosphothreonine modification. Residue cysteine 619 is modified to S-nitrosocysteine. Serine 675 is modified (phosphoserine). The segment at 705–781 (EPLGYRQDDP…NQLAWFDTDL (77 aa)) is disordered. Residues 734 to 745 (MMEHEMGGHHPG) are compositionally biased toward basic and acidic residues. Positions 772–781 (NQLAWFDTDL) are interaction with SCRIB.

This sequence belongs to the beta-catenin family. In terms of assembly, two separate complex-associated pools are found in the cytoplasm. The majority is present as component of an E-cadherin:catenin adhesion complex composed of at least E-cadherin/CDH1 and beta-catenin/CTNNB1, and possibly alpha-catenin/CTNNA1; the complex is located to adherens junctions. The stable association of CTNNA1 is controversial as CTNNA1 was shown not to bind to F-actin when assembled in the complex. Alternatively, the CTNNA1-containing complex may be linked to F-actin by other proteins such as LIMA1. Another cytoplasmic pool is part of a large complex containing AXIN1, AXIN2, APC, CSNK1A1 and GSK3B that promotes phosphorylation on N-terminal Ser and Thr residues and ubiquitination of CTNNB1 via BTRC and its subsequent degradation by the proteasome. Wnt-dependent activation of DVL antagonizes the action of GSK3B. When GSK3B activity is inhibited the complex dissociates, CTNNB1 is dephosphorylated and is no longer targeted for destruction. The stabilized protein translocates to the nucleus, where it binds TCF/LEF-1 family members, BCL9, BCL9L and possibly also RUVBL1 and CHD8. Binds CTNNBIP and EP300. CTNNB1 forms a ternary complex with LEF1 and EP300 that is disrupted by CTNNBIP1 binding. Interacts with TAX1BP3 (via the PDZ domain); this interaction inhibits the transcriptional activity of CTNNB1. Interacts with AJAP1, BAIAP1, CARM1, CTNNA3, CXADR and PCDH11Y. Binds NHERF1. Interacts with GLIS2 and MUC1. Interacts with SLC30A9. Interacts with XIRP1. Interacts directly with AXIN1; the interaction is regulated by CDK2 phosphorylation of AXIN1. Interacts with SCRIB. Interacts with RAPGEF2. Interacts with PTPRU (via the cytoplasmic juxtamembrane domain). Interacts with EMD. Interacts with TNIK and TCF7L2. Interacts with SESTD1 and TRPC4. Interacts with CAV1. Interacts with TRPV4. The TRPV4 and CTNNB1 complex can interact with CDH1. Interacts with VCL. Interacts with PTPRJ. Interacts with PKT7 and CDK2. Interacts with FAT1 (via the cytoplasmic domain). Interacts with NANOS1 and NDRG2. Interacts with isoform 1 of NEK2. Interacts with both isoform 1 and isoform 2 of CDK5. Interacts with PTK6. Interacts with SOX7; this interaction may lead to proteasomal degradation of active CTNNB1 and thus inhibition of Wnt/beta-catenin-stimulated transcription. Identified in a complex with HINT1 and MITF. Interacts with FHIT. The CTNNB1 and TCF7L2/TCF4 complex interacts with PML (isoform PML-4). Interacts with FERMT2. Identified in a complex with TCF7L2/TCF4 and FERMT2. Interacts with RORA. May interact with P-cadherin/CDH3. Interacts with RNF220. Interacts with CTNND2. Interacts (via the C-terminal region) with CBY1. The complex composed, at least, of APC, CTNNB1 and GSK3B interacts with JPT1; the interaction requires the inactive form of GSK3B (phosphorylated at 'Ser-9'). Interacts with DLG5. Interacts with FAM53B; promoting translocation to the nucleus. Interacts with TMEM170B. Interacts with AHI1. Interacts with GID8. Component of an cadherin:catenin adhesion complex composed of at least of CDH26, beta-catenin/CTNNB1, alpha-catenin/CTNNA1 and p120 catenin/CTNND1. Forms a complex comprising APPL1, RUVBL2, APPL2, HDAC1 and HDAC2. Interacts with IRF2BPL; mediates the ubiquitination and degradation of CTNNB1. Interacts with AMFR. Interacts with LMBR1L. Interacts with SOX30; prevents interaction of CTNNB1 with TCF7L2/TCF4 and leads to inhibition of Wnt signaling. Interacts with SOX9; inhibiting CTNNB1 activity by competing with the binding sites of TCF/LEF within CTNNB1, thereby inhibiting the Wnt signaling. Interacts with SPN/CD43 cytoplasmic tail. Interacts (when phosphorylated at Tyr-333) with isoform M2 of PKM (PKM2); promoting transcription activation. Interacts with PKP2 (via HEAD domain). Interacts with CDH1. Interacts (when unphosphorylated) with FLYWCH1, perhaps preventing interaction of CTNNB1 with TCF4, and thereby regulating transcription activation; phosphorylation of CTNNB1 may inhibit the interaction. Interacts (via the central armadillo domains) with probable transcriptional regulator ADNP (via N-terminal region); interaction is direct and stabilizes CTNNB1 by modulating its phosphorylation by glycogen synthase kinase-3 beta GSK3B. Interacts with NR5A2. Interacts with DSG2; the interaction promotes localization of CTNNB1 at cell junctions thus reducing its nuclear localization and subsequent transcription of CTNNB1/TCF-target genes. (Microbial infection) Interacts with herpes virus 8 protein vPK; this interaction inhibits the Wnt signaling pathway. Post-translationally, phosphorylation at Ser-552 by AMPK promotes stabilization of the protein, enhancing TCF/LEF-mediated transcription. Phosphorylation by GSK3B requires prior phosphorylation of Ser-45 by another kinase. Phosphorylation proceeds then from Thr-41 to Ser-37 and Ser-33. Phosphorylated by NEK2. EGF stimulates tyrosine phosphorylation. Phosphorylated on Ser-33 and Ser-37 by HIPK2 and GSK3B, this phosphorylation triggers proteasomal degradation. Phosphorylation on Ser-191 and Ser-246 by CDK5. Phosphorylation by CDK2 regulates insulin internalization. Phosphorylation by PTK6 at Tyr-64, Tyr-142, Tyr-331 and/or Tyr-333 with the predominant site at Tyr-64 is not essential for inhibition of transcriptional activity. Phosphorylation by SRC at Tyr-333 promotes interaction with isoform M2 of PKM (PKM2); promoting transcription activation. In terms of processing, ubiquitinated by the SCF(BTRC) E3 ligase complex when phosphorylated by GSK3B, leading to its degradation. Ubiquitinated by a E3 ubiquitin ligase complex containing UBE2D1, SIAH1, CACYBP/SIP, SKP1, APC and TBL1X, leading to its subsequent proteasomal degradation. Ubiquitinated and degraded following interaction with SOX9. Ubiquitinated via 'Lys-11'- and 'Lys-29'-linked ubiquitin chains by UBR5, leading to its stabilization. S-nitrosylation at Cys-619 within adherens junctions promotes VEGF-induced, NO-dependent endothelial cell permeability by disrupting interaction with E-cadherin, thus mediating disassembly adherens junctions. Post-translationally, O-glycosylation at Ser-23 decreases nuclear localization and transcriptional activity, and increases localization to the plasma membrane and interaction with E-cadherin CDH1. In terms of processing, deacetylated at Lys-49 by SIRT1. Phosphorylated at Thr-556 by herpes virus 1/HHV-1 leading to CTNNB1 inhibition. As to expression, expressed in several hair follicle cell types: basal and peripheral matrix cells, and cells of the outer and inner root sheaths. Expressed in colon. Present in cortical neurons (at protein level). Expressed in breast cancer tissues (at protein level).

The protein localises to the cytoplasm. It localises to the nucleus. The protein resides in the cytoskeleton. Its subcellular location is the cell junction. It is found in the adherens junction. The protein localises to the cell membrane. It localises to the microtubule organizing center. The protein resides in the centrosome. Its subcellular location is the spindle pole. It is found in the synapse. The protein localises to the cilium basal body. Functionally, key downstream component of the canonical Wnt signaling pathway. In the absence of Wnt, forms a complex with AXIN1, AXIN2, APC, CSNK1A1 and GSK3B that promotes phosphorylation on N-terminal Ser and Thr residues and ubiquitination of CTNNB1 via BTRC and its subsequent degradation by the proteasome. In the presence of Wnt ligand, CTNNB1 is not ubiquitinated and accumulates in the nucleus, where it acts as a coactivator for transcription factors of the TCF/LEF family, leading to activate Wnt responsive genes. Also acts as a coactivator for other transcription factors, such as NR5A2. Promotes epithelial to mesenchymal transition/mesenchymal to epithelial transition (EMT/MET) via driving transcription of CTNNB1/TCF-target genes. Involved in the regulation of cell adhesion, as component of an E-cadherin:catenin adhesion complex. Acts as a negative regulator of centrosome cohesion. Involved in the CDK2/PTPN6/CTNNB1/CEACAM1 pathway of insulin internalization. Blocks anoikis of malignant kidney and intestinal epithelial cells and promotes their anchorage-independent growth by down-regulating DAPK2. Disrupts PML function and PML-NB formation by inhibiting RANBP2-mediated sumoylation of PML. Promotes neurogenesis by maintaining sympathetic neuroblasts within the cell cycle. Involved in chondrocyte differentiation via interaction with SOX9: SOX9-binding competes with the binding sites of TCF/LEF within CTNNB1, thereby inhibiting the Wnt signaling. Acts as a positive regulator of odontoblast differentiation during mesenchymal tooth germ formation, via promoting the transcription of differentiation factors such as LEF1, BMP2 and BMP4. Activity is repressed in a MSX1-mediated manner at the bell stage of mesenchymal tooth germ formation which prevents premature differentiation of odontoblasts. This Homo sapiens (Human) protein is Catenin beta-1.